The sequence spans 164 residues: Succinate dehydrogenase assembly factor 2, mitochondrial (164 aa).

The transit peptide at 1-27 (MAVVTLIPTLARVLSKHSLLSPLLSVT) directs the protein to the mitochondrion.

Belongs to the SDHAF2 family. Interacts with SDHA within the SDH catalytic dimer.

The protein localises to the mitochondrion matrix. Plays an essential role in the assembly of succinate dehydrogenase (SDH), an enzyme complex (also referred to as respiratory complex II) that is a component of both the tricarboxylic acid (TCA) cycle and the mitochondrial electron transport chain, and which couples the oxidation of succinate to fumarate with the reduction of ubiquinone (coenzyme Q) to ubiquinol. Required for flavinylation (covalent attachment of FAD) of the flavoprotein subunit SDHA of the SDH catalytic dimer. This chain is Succinate dehydrogenase assembly factor 2, mitochondrial, found in Rattus norvegicus (Rat).